The primary structure comprises 450 residues: tRNA modification GTPase MnmE (450 aa).

(6S)-5-formyl-5,6,7,8-tetrahydrofolate is bound by residues R23, E80, and R123. The region spanning 219–372 is the TrmE-type G domain; the sequence is GLHVVLAGKP…LRQRLLQLAG (154 aa). N229 is a binding site for K(+). GTP-binding positions include 229 to 234, 248 to 254, 273 to 276, and 353 to 355; these read NVGKSS, TPIAGTT, DTAG, and SAR. Residue S233 coordinates Mg(2+). Positions 248, 250, and 253 each coordinate K(+). A Mg(2+)-binding site is contributed by T254. Residue K450 coordinates (6S)-5-formyl-5,6,7,8-tetrahydrofolate.

Belongs to the TRAFAC class TrmE-Era-EngA-EngB-Septin-like GTPase superfamily. TrmE GTPase family. Homodimer. Heterotetramer of two MnmE and two MnmG subunits. K(+) is required as a cofactor.

Its subcellular location is the cytoplasm. Its function is as follows. Exhibits a very high intrinsic GTPase hydrolysis rate. Involved in the addition of a carboxymethylaminomethyl (cmnm) group at the wobble position (U34) of certain tRNAs, forming tRNA-cmnm(5)s(2)U34. This is tRNA modification GTPase MnmE from Bordetella bronchiseptica (strain ATCC BAA-588 / NCTC 13252 / RB50) (Alcaligenes bronchisepticus).